Here is a 1105-residue protein sequence, read N- to C-terminus: Lysylphosphatidylglycerol biosynthesis bifunctional protein LysX (1105 aa).

The interval Met1–Asp603 is phosphatidylglycerol lysyltransferase. A run of 7 helical transmembrane segments spans residues Val20 to Ile40, Phe62 to Ala82, Ile86 to Ile106, Phe117 to Tyr137, Ala154 to Phe174, Tyr186 to Thr203, and Val208 to Val228. The tract at residues Val604–His1105 is lysine--tRNA ligase. Positions 1017 and 1024 each coordinate Mg(2+).

In the N-terminal section; belongs to the LPG synthetase family. The protein in the C-terminal section; belongs to the class-II aminoacyl-tRNA synthetase family. The cofactor is Mg(2+).

Its subcellular location is the cell membrane. The catalysed reaction is tRNA(Lys) + L-lysine + ATP = L-lysyl-tRNA(Lys) + AMP + diphosphate. It catalyses the reaction L-lysyl-tRNA(Lys) + a 1,2-diacyl-sn-glycero-3-phospho-(1'-sn-glycerol) = a 1,2-diacyl-sn-glycero-3-phospho-1'-(3'-O-L-lysyl)-sn-glycerol + tRNA(Lys). Functionally, catalyzes the production of L-lysyl-tRNA(Lys)transfer and the transfer of a lysyl group from L-lysyl-tRNA(Lys) to membrane-bound phosphatidylglycerol (PG), which produces lysylphosphatidylglycerol (LPG), one of the components of the bacterial membrane with a positive net charge. LPG synthesis contributes to the resistance to cationic antimicrobial peptides (CAMPs) and likely protects M.tuberculosis against the CAMPs produced by competiting microorganisms (bacteriocins). In fact, the modification of anionic phosphatidylglycerol with positively charged L-lysine results in repulsion of the peptides. In Mycobacterium ulcerans (strain Agy99), this protein is Lysylphosphatidylglycerol biosynthesis bifunctional protein LysX (lysX).